We begin with the raw amino-acid sequence, 203 residues long: Glycerol-3-phosphate acyltransferase (203 aa).

4 helical membrane-spanning segments follow: residues 6-26 (LTLL…AVLV), 82-102 (AISL…PIFF), 118-138 (APIG…LVLI), and 141-161 (YSSL…WWLD).

This sequence belongs to the PlsY family. Probably interacts with PlsX.

It localises to the cell inner membrane. It carries out the reaction an acyl phosphate + sn-glycerol 3-phosphate = a 1-acyl-sn-glycero-3-phosphate + phosphate. It participates in lipid metabolism; phospholipid metabolism. Functionally, catalyzes the transfer of an acyl group from acyl-phosphate (acyl-PO(4)) to glycerol-3-phosphate (G3P) to form lysophosphatidic acid (LPA). This enzyme utilizes acyl-phosphate as fatty acyl donor, but not acyl-CoA or acyl-ACP. The polypeptide is Glycerol-3-phosphate acyltransferase (Shewanella sp. (strain ANA-3)).